Reading from the N-terminus, the 153-residue chain is 3-hydroxyacyl-[acyl-carrier-protein] dehydratase FabZ (153 aa).

The active site involves His54.

The protein belongs to the thioester dehydratase family. FabZ subfamily.

It is found in the cytoplasm. The enzyme catalyses a (3R)-hydroxyacyl-[ACP] = a (2E)-enoyl-[ACP] + H2O. Functionally, involved in unsaturated fatty acids biosynthesis. Catalyzes the dehydration of short chain beta-hydroxyacyl-ACPs and long chain saturated and unsaturated beta-hydroxyacyl-ACPs. This is 3-hydroxyacyl-[acyl-carrier-protein] dehydratase FabZ from Shewanella frigidimarina (strain NCIMB 400).